Here is a 288-residue protein sequence, read N- to C-terminus: Aquaporin PIP 1-3 (288 aa).

Positions 1 to 30 (MEGKEEDVRLGANRYTERQPIGTAAQGAEE) are disordered. 2 helical membrane passes run 57-77 (IAEF…VMGV) and 92-114 (IAWS…SGGH). An NPA 1 motif is present at residues 116 to 118 (NPA). 3 helical membrane passes run 135-155 (VFYM…VKGF), 177-197 (GDGL…VFSA), and 211-231 (ILAP…TIPI). An NPA 2 motif is present at residues 237 to 239 (NPA). Residues 259–279 (IFWVGPFIGAALAAIYHVVVI) form a helical membrane-spanning segment.

Belongs to the MIP/aquaporin (TC 1.A.8) family. PIP (TC 1.A.8.11) subfamily. In terms of tissue distribution, expressed in roots and leaves.

The protein localises to the cell membrane. Water channel required to facilitate the transport of water across cell membrane. Increases the capacity for root water uptake under water deficit. May play a role in drought avoidance in upland rice. In Oryza sativa subsp. japonica (Rice), this protein is Aquaporin PIP 1-3 (PIP1-3).